An 811-amino-acid polypeptide reads, in one-letter code: Ribonucleoside-diphosphate reductase large subunit (811 aa).

Residues threonine 231, 246–247 (SC), glycine 277, 450–454 (NLCTE), and 636–640 (PTASS) each bind substrate. An intrachain disulfide couples cysteine 247 to cysteine 467. Asparagine 450 serves as the catalytic Proton acceptor. The Cysteine radical intermediate role is filled by cysteine 452. The active-site Proton acceptor is glutamate 454.

The protein belongs to the ribonucleoside diphosphate reductase large chain family. As to quaternary structure, heterotetramer composed of a homodimer of the large subunit (R1) and a homodimer of the small subunit (R2). Larger multisubunit protein complex are also active, composed of (R1)n(R2)n.

It catalyses the reaction a 2'-deoxyribonucleoside 5'-diphosphate + [thioredoxin]-disulfide + H2O = a ribonucleoside 5'-diphosphate + [thioredoxin]-dithiol. Ribonucleoside-diphosphate reductase holoenzyme provides the precursors necessary for viral DNA synthesis. Allows virus growth in non-dividing cells, as well as reactivation from latency in infected hosts. Catalyzes the biosynthesis of deoxyribonucleotides from the corresponding ribonucleotides. This is Ribonucleoside-diphosphate reductase large subunit from Amazona oratrix (yellow-headed parrot).